The following is a 237-amino-acid chain: tRNA (guanine-N(1)-)-methyltransferase (237 aa).

S-adenosyl-L-methionine contacts are provided by residues Gly113 and 133–138 (VGDFIV).

Belongs to the RNA methyltransferase TrmD family. As to quaternary structure, homodimer.

The protein localises to the cytoplasm. It catalyses the reaction guanosine(37) in tRNA + S-adenosyl-L-methionine = N(1)-methylguanosine(37) in tRNA + S-adenosyl-L-homocysteine + H(+). Specifically methylates guanosine-37 in various tRNAs. The chain is tRNA (guanine-N(1)-)-methyltransferase from Hydrogenovibrio crunogenus (strain DSM 25203 / XCL-2) (Thiomicrospira crunogena).